Consider the following 1191-residue polypeptide: Major DNA-binding protein (1191 aa).

The disordered stretch occupies residues E288–G307. A zinc finger spans residues C498–H511. Positions F841 to W842 match the Required for filament formation motif. Positions K1166–L1191 are required for nuclear localization.

This sequence belongs to the herpesviridae major DNA-binding protein family. In terms of assembly, homooligomers. Forms double-helical filaments necessary for the formation of replication compartments within the host nucleus. Interacts with the origin-binding protein. Interacts with the helicase primase complex; this interaction stimulates primer synthesis activity of the helicase-primase complex. Interacts with the DNA polymerase. Interacts with the alkaline exonuclease; this interaction increases its nuclease processivity.

The protein resides in the host nucleus. Plays several crucial roles in viral infection. Participates in the opening of the viral DNA origin to initiate replication by interacting with the origin-binding protein. May disrupt loops, hairpins and other secondary structures present on ssDNA to reduce and eliminate pausing of viral DNA polymerase at specific sites during elongation. Promotes viral DNA recombination by performing strand-transfer, characterized by the ability to transfer a DNA strand from a linear duplex to a complementary single-stranded DNA circle. Can also catalyze the renaturation of complementary single strands. Additionally, reorganizes the host cell nucleus, leading to the formation of prereplicative sites and replication compartments. This process is driven by the protein which can form double-helical filaments in the absence of DNA. The protein is Major DNA-binding protein of Gallid herpesvirus 2 (strain Chicken/Md5/ATCC VR-987) (GaHV-2).